The following is a 125-amino-acid chain: Prepro-urotensin II-gamma (125 aa).

The signal sequence occupies residues 1–21; the sequence is MMCNLLLSCSVLLLSCSHLLA. Residues 109-111 constitute a propeptide that is removed on maturation; the sequence is QFR. Cysteines 119 and 124 form a disulfide.

It belongs to the urotensin-2 family.

The protein resides in the secreted. Urotensin is found in the teleost caudal neurosecretory system. It has a suggested role in osmoregulation and as a corticotropin-releasing factor. The non-hormonal portion of this precursor may be a urotensin binding protein, urophysin. This Cyprinus carpio (Common carp) protein is Prepro-urotensin II-gamma.